We begin with the raw amino-acid sequence, 140 residues long: Nucleoside diphosphate kinase (140 aa).

The ATP site is built by lysine 11, phenylalanine 59, arginine 87, threonine 93, arginine 104, and asparagine 114. Residue histidine 117 is the Pros-phosphohistidine intermediate of the active site.

It belongs to the NDK family. Homotetramer. Mg(2+) serves as cofactor.

It is found in the cytoplasm. It carries out the reaction a 2'-deoxyribonucleoside 5'-diphosphate + ATP = a 2'-deoxyribonucleoside 5'-triphosphate + ADP. The catalysed reaction is a ribonucleoside 5'-diphosphate + ATP = a ribonucleoside 5'-triphosphate + ADP. Major role in the synthesis of nucleoside triphosphates other than ATP. The ATP gamma phosphate is transferred to the NDP beta phosphate via a ping-pong mechanism, using a phosphorylated active-site intermediate. This Methylorubrum populi (strain ATCC BAA-705 / NCIMB 13946 / BJ001) (Methylobacterium populi) protein is Nucleoside diphosphate kinase.